Reading from the N-terminus, the 160-residue chain is Cyclic pyranopterin monophosphate synthase (160 aa).

Substrate is bound by residues 75–77 (MCH) and 115–116 (ME). Residue D130 is part of the active site.

Belongs to the MoaC family. In terms of assembly, homohexamer; trimer of dimers.

The enzyme catalyses (8S)-3',8-cyclo-7,8-dihydroguanosine 5'-triphosphate = cyclic pyranopterin phosphate + diphosphate. The protein operates within cofactor biosynthesis; molybdopterin biosynthesis. Functionally, catalyzes the conversion of (8S)-3',8-cyclo-7,8-dihydroguanosine 5'-triphosphate to cyclic pyranopterin monophosphate (cPMP). The sequence is that of Cyclic pyranopterin monophosphate synthase from Lysinibacillus sphaericus (strain C3-41).